We begin with the raw amino-acid sequence, 200 residues long: Phospholipase A2 inhibitor gamma subunit A (200 aa).

Positions 1-19 (MKSLHTICLLFIFIARGNS) are cleaved as a signal peptide. 8 disulfide bridges follow: Cys22-Cys46, Cys25-Cys32, Cys39-Cys67, Cys73-Cys94, Cys95-Cys100, Cys118-Cys143, Cys136-Cys165, and Cys169-Cys191. The N-linked (GlcNAc...) asparagine glycan is linked to Asn176.

The protein belongs to the CNF-like-inhibitor family. In terms of assembly, occurs as a mixture of oligomers. Tetrameric arrangement appears to be the predominant quaternary structure. As to expression, expressed by the liver.

The protein localises to the secreted. Functionally, inhibits the enzymatic activity of phospholipase A2 (PA2). The chain is Phospholipase A2 inhibitor gamma subunit A from Gloydius brevicaudus siniticus (Chinese mamushi).